Here is a 384-residue protein sequence, read N- to C-terminus: MAP kinase-activated protein kinase 3 (384 aa).

Met1 is subject to N-acetylmethionine. The segment at 1–22 (MDVETAEEQGGPAPPSGVPCGP) is disordered. The Protein kinase domain maps to 46–306 (QLSKQVLGLG…ITQFMNHPWI (261 aa)). ATP is bound by residues 52–60 (LGLGVNGKV) and Lys75. Asp168 acts as the Proton acceptor in catalysis. At Thr203 the chain carries Phosphothreonine; by MAPK14. Ser253 is modified (phosphoserine; by MAPK14). The residue at position 309 (Ser309) is a Phosphoserine; by autocatalysis. The segment at 309-345 (SMVVPQTPLHTARVLQEDRDHWDEVKEEMTSALATMR) is autoinhibitory helix. Position 315 is a phosphothreonine; by MAPK14 (Thr315). A Nuclear export signal (NES) motif is present at residues 337–346 (MTSALATMRV). Positions 347–371 (DYDQVKIKDLKTSNNRLLNKRRKKQ) are p38 MAPK-binding site. 2 short sequence motifs (bipartite nuclear localization signal) span residues 352–355 (KIKD) and 366–370 (KRRKK). A disordered region spans residues 359–384 (SNNRLLNKRRKKQAGSSSGSQGCNNQ). A compositionally biased stretch (low complexity) spans 373–384 (GSSSGSQGCNNQ).

Belongs to the protein kinase superfamily. CAMK Ser/Thr protein kinase family. Heterodimer with p38-alpha/MAPK14. The heterodimer with p38-alpha/MAPK14 forms a stable complex: molecules are positioned 'face to face' so that the ATP-binding sites of both kinases are at the heterodimer interface. Interacts with TCF3 and with polycomb proteins, such as PCH2 and BMI1/PCGF4. Post-translationally, phosphorylated and activated by MAPK1/ERK2 and MAPK3/ERK1. Phosphorylated and activated by MAP kinase p38-alpha/MAPK14 at Thr-203, Ser-253 and Thr-315.

It localises to the nucleus. Its subcellular location is the cytoplasm. It catalyses the reaction L-seryl-[protein] + ATP = O-phospho-L-seryl-[protein] + ADP + H(+). The catalysed reaction is L-threonyl-[protein] + ATP = O-phospho-L-threonyl-[protein] + ADP + H(+). Its activity is regulated as follows. Activated following phosphorylation by p38-alpha/MAPK14 following various stresses. Inhibited by ligand 5B (2'-[2-(1,3-benzodioxol-5-yl)pyrimidin-4-yl]-5',6'-dihydrospiro[piperidine-4,7'-pyrrolo[3,2-c]pyridin]- 4'(1'h)-one) and ligand P4O (2-[2-(2-fluorophenyl)pyridin-4-yl]-1,5,6,7-tetrahydro- 4h-pyrrolo[3,2-c]pyridin-4-one), 2 ATP-competitive inhibitors. In terms of biological role, stress-activated serine/threonine-protein kinase involved in cytokines production, endocytosis, cell migration, chromatin remodeling and transcriptional regulation. Following stress, it is phosphorylated and activated by MAP kinase p38-alpha/MAPK14, leading to phosphorylation of substrates. Phosphorylates serine in the peptide sequence, Hyd-X-R-X(2)-S, where Hyd is a large hydrophobic residue. MAPKAPK2 and MAPKAPK3, share the same function and substrate specificity, but MAPKAPK3 kinase activity and level in protein expression are lower compared to MAPKAPK2. Phosphorylates HSP27/HSPB1, KRT18, KRT20, RCSD1, RPS6KA3, TAB3 and TTP/ZFP36. Mediates phosphorylation of HSP27/HSPB1 in response to stress, leading to dissociate HSP27/HSPB1 from large small heat-shock protein (sHsps) oligomers and impair their chaperone activities and ability to protect against oxidative stress effectively. Involved in inflammatory response by regulating tumor necrosis factor (TNF) and IL6 production post-transcriptionally: acts by phosphorylating AU-rich elements (AREs)-binding proteins, such as TTP/ZFP36, leading to regulate the stability and translation of TNF and IL6 mRNAs. Phosphorylation of TTP/ZFP36, a major post-transcriptional regulator of TNF, promotes its binding to 14-3-3 proteins and reduces its ARE mRNA affinity leading to inhibition of dependent degradation of ARE-containing transcript. Involved in toll-like receptor signaling pathway (TLR) in dendritic cells: required for acute TLR-induced macropinocytosis by phosphorylating and activating RPS6KA3. Also acts as a modulator of Polycomb-mediated repression. This chain is MAP kinase-activated protein kinase 3 (MAPKAPK3), found in Bos taurus (Bovine).